A 119-amino-acid polypeptide reads, in one-letter code: NADH-quinone oxidoreductase subunit A (119 aa).

3 helical membrane passes run 9 to 29, 63 to 83, and 88 to 108; these read VLLF…LGYV, LVAI…PWAV, and VGGA…VGFV.

It belongs to the complex I subunit 3 family. As to quaternary structure, NDH-1 is composed of 14 different subunits. Subunits NuoA, H, J, K, L, M, N constitute the membrane sector of the complex.

It localises to the cell inner membrane. It carries out the reaction a quinone + NADH + 5 H(+)(in) = a quinol + NAD(+) + 4 H(+)(out). Functionally, NDH-1 shuttles electrons from NADH, via FMN and iron-sulfur (Fe-S) centers, to quinones in the respiratory chain. The immediate electron acceptor for the enzyme in this species is believed to be ubiquinone. Couples the redox reaction to proton translocation (for every two electrons transferred, four hydrogen ions are translocated across the cytoplasmic membrane), and thus conserves the redox energy in a proton gradient. The protein is NADH-quinone oxidoreductase subunit A of Delftia acidovorans (strain DSM 14801 / SPH-1).